Reading from the N-terminus, the 220-residue chain is Deoxyribose-phosphate aldolase (220 aa).

The active-site Proton donor/acceptor is the aspartate 92. Catalysis depends on lysine 155, which acts as the Schiff-base intermediate with acetaldehyde. The active-site Proton donor/acceptor is lysine 184.

Belongs to the DeoC/FbaB aldolase family. DeoC type 1 subfamily.

Its subcellular location is the cytoplasm. It carries out the reaction 2-deoxy-D-ribose 5-phosphate = D-glyceraldehyde 3-phosphate + acetaldehyde. The protein operates within carbohydrate degradation; 2-deoxy-D-ribose 1-phosphate degradation; D-glyceraldehyde 3-phosphate and acetaldehyde from 2-deoxy-alpha-D-ribose 1-phosphate: step 2/2. Functionally, catalyzes a reversible aldol reaction between acetaldehyde and D-glyceraldehyde 3-phosphate to generate 2-deoxy-D-ribose 5-phosphate. This chain is Deoxyribose-phosphate aldolase, found in Symbiobacterium thermophilum (strain DSM 24528 / JCM 14929 / IAM 14863 / T).